A 456-amino-acid chain; its full sequence is Iroquois-class homeodomain protein irx-2 (456 aa).

The segment at residues D110–N172 is a DNA-binding region (homeobox; TALE-type). Disordered stretches follow at residues N172–E214, C246–K320, and R434–P456. 2 stretches are compositionally biased toward basic and acidic residues: residues G192–D205 and C246–Y256. A compositionally biased stretch (acidic residues) spans D257–D269. Residues N291–A318 are compositionally biased toward polar residues.

Belongs to the TALE/IRO homeobox family. Expressed in the neural plate in overlapping patterns with other irx members, which all share an anterior border of expression. Also expressed in the placodes. Broadly expressed in the tailbud rhombencephalon (hindbrain). Outside the nervous system and at tailbud stages, expressed in the developing otic vesicle, branchial arches, prospective heart region and pronephros.

It is found in the nucleus. Acts partially redundantly with other irx members in neural patterning. Required for formation of the posterior forebrain, midbrain, hindbrain, and to a lesser extent, spinal cord. Acts early in neural plate development to induce expression of some but not all proneural genes, and specify a neural precursor state. Also up-regulates repressors that prevent neuronal differentiation. Patterns the neuroectoderm in both the anterior/posterior and dorsal/ventral axes. Probably dispensable for pronephric kidney development. The polypeptide is Iroquois-class homeodomain protein irx-2 (Xenopus tropicalis (Western clawed frog)).